Consider the following 230-residue polypeptide: Thymidylate kinase (230 aa).

Residue 20-27 (GGEGAGKS) coordinates ATP.

It belongs to the thymidylate kinase family.

It catalyses the reaction dTMP + ATP = dTDP + ADP. Phosphorylation of dTMP to form dTDP in both de novo and salvage pathways of dTTP synthesis. The sequence is that of Thymidylate kinase from Rhodopseudomonas palustris (strain TIE-1).